The sequence spans 319 residues: Acetyl-coenzyme A carboxylase carboxyl transferase subunit alpha (319 aa).

A CoA carboxyltransferase C-terminal domain is found at 35–296 (DLEKEIKQLE…KQRLLEQLKE (262 aa)).

Belongs to the AccA family. As to quaternary structure, acetyl-CoA carboxylase is a heterohexamer composed of biotin carboxyl carrier protein (AccB), biotin carboxylase (AccC) and two subunits each of ACCase subunit alpha (AccA) and ACCase subunit beta (AccD).

It is found in the cytoplasm. The enzyme catalyses N(6)-carboxybiotinyl-L-lysyl-[protein] + acetyl-CoA = N(6)-biotinyl-L-lysyl-[protein] + malonyl-CoA. It participates in lipid metabolism; malonyl-CoA biosynthesis; malonyl-CoA from acetyl-CoA: step 1/1. Its function is as follows. Component of the acetyl coenzyme A carboxylase (ACC) complex. First, biotin carboxylase catalyzes the carboxylation of biotin on its carrier protein (BCCP) and then the CO(2) group is transferred by the carboxyltransferase to acetyl-CoA to form malonyl-CoA. The polypeptide is Acetyl-coenzyme A carboxylase carboxyl transferase subunit alpha (Aliivibrio fischeri (strain MJ11) (Vibrio fischeri)).